Here is a 323-residue protein sequence, read N- to C-terminus: V-type ATP synthase subunit C (323 aa).

Belongs to the V-ATPase V0D/AC39 subunit family.

Produces ATP from ADP in the presence of a proton gradient across the membrane. The polypeptide is V-type ATP synthase subunit C (Thermus thermophilus (strain ATCC BAA-163 / DSM 7039 / HB27)).